A 227-amino-acid polypeptide reads, in one-letter code: Phosphatidylserine decarboxylase proenzyme (227 aa).

Residue Ser-184 is the Schiff-base intermediate with substrate; via pyruvic acid of the active site. Ser-184 is subject to Pyruvic acid (Ser); by autocatalysis.

This sequence belongs to the phosphatidylserine decarboxylase family. PSD-A subfamily. Heterodimer of a large membrane-associated beta subunit and a small pyruvoyl-containing alpha subunit. Pyruvate serves as cofactor. Is synthesized initially as an inactive proenzyme. Formation of the active enzyme involves a self-maturation process in which the active site pyruvoyl group is generated from an internal serine residue via an autocatalytic post-translational modification. Two non-identical subunits are generated from the proenzyme in this reaction, and the pyruvate is formed at the N-terminus of the alpha chain, which is derived from the carboxyl end of the proenzyme. The post-translation cleavage follows an unusual pathway, termed non-hydrolytic serinolysis, in which the side chain hydroxyl group of the serine supplies its oxygen atom to form the C-terminus of the beta chain, while the remainder of the serine residue undergoes an oxidative deamination to produce ammonia and the pyruvoyl prosthetic group on the alpha chain.

The protein localises to the cell membrane. The enzyme catalyses a 1,2-diacyl-sn-glycero-3-phospho-L-serine + H(+) = a 1,2-diacyl-sn-glycero-3-phosphoethanolamine + CO2. It participates in phospholipid metabolism; phosphatidylethanolamine biosynthesis; phosphatidylethanolamine from CDP-diacylglycerol: step 2/2. In terms of biological role, catalyzes the formation of phosphatidylethanolamine (PtdEtn) from phosphatidylserine (PtdSer). This Ehrlichia ruminantium (strain Gardel) protein is Phosphatidylserine decarboxylase proenzyme.